The primary structure comprises 1801 residues: U3 small nucleolar RNA-associated protein 10 (1801 aa).

A run of 2 helical transmembrane segments spans residues 102–122 (LALV…EWLI) and 136–156 (ILTF…AILP). The stretch at 581-619 (DVDVQALLPFMLIALADPSERVRSGAVDALANIGKVVDK) is one HEAT 1 repeat. Transmembrane regions (helical) follow at residues 939–959 (IQSG…AIVN) and 995–1015 (ALLL…HSVM). HEAT repeat units follow at residues 1038–1076 (DQTI…AFEH), 1110–1148 (YSMD…DSLK), 1244–1282 (TLTT…QSPE), 1288–1327 (QTRM…KYGK), and 1756–1794 (LALL…VLGE).

Belongs to the HEATR1/UTP10 family. In terms of assembly, component of the ribosomal small subunit (SSU) processome.

Its subcellular location is the nucleus. It is found in the nucleolus. It localises to the membrane. Involved in nucleolar processing of pre-18S ribosomal RNA. Involved in ribosome biosynthesis. This is U3 small nucleolar RNA-associated protein 10 from Emericella nidulans (strain FGSC A4 / ATCC 38163 / CBS 112.46 / NRRL 194 / M139) (Aspergillus nidulans).